Reading from the N-terminus, the 227-residue chain is Glutathione S-transferase U18 (227 aa).

The GST N-terminal domain occupies 4–83 (EDVKLIGSWA…YIDEAWNSSG (80 aa)). Residues 14–15 (SV), 40–41 (SK), 54–55 (KM), and 67–68 (ES) contribute to the glutathione site. A GST C-terminal domain is found at 90-221 (HPYDRAIARF…TKLAEFARKL (132 aa)).

It belongs to the GST superfamily. Tau family.

It localises to the cytoplasm. The protein localises to the cytosol. It carries out the reaction RX + glutathione = an S-substituted glutathione + a halide anion + H(+). May be involved in the conjugation of reduced glutathione to a wide number of exogenous and endogenous hydrophobic electrophiles and have a detoxification role against certain herbicides. This Arabidopsis thaliana (Mouse-ear cress) protein is Glutathione S-transferase U18 (GSTU18).